A 192-amino-acid polypeptide reads, in one-letter code: MGARDCTPLLMLSFLLFPLGFPVLGAPARLICDSRVLERYILEAREAENATMGCAEGCSFNENITVPDTKVNFYAWKRMEVQQQALEVWQGLALLSEAILRGQALLANASQPCEALRLHVDKAVSGLRSLTSLLRALGAQKEAISLPDATPSAAPLRAFTVDALSKLFRIYSNFLRGKLTLYTGEACRRGDR.

A signal peptide spans 1-25 (MGARDCTPLLMLSFLLFPLGFPVLG). 2 cysteine pairs are disulfide-bonded: Cys-32-Cys-187 and Cys-54-Cys-58. Asn-49 carries an N-linked (GlcNAc...) asparagine glycan. Asn-63 and Asn-108 each carry an N-linked (GlcNAc...) asparagine glycan.

This sequence belongs to the EPO/TPO family. As to expression, produced by kidney or liver of adult mammals and by liver of fetal or neonatal mammals.

It is found in the secreted. Its function is as follows. Hormone involved in the regulation of erythrocyte proliferation and differentiation and the maintenance of a physiological level of circulating erythrocyte mass. Binds to EPOR leading to EPOR dimerization and JAK2 activation thereby activating specific downstream effectors, including STAT1 and STAT3. The chain is Erythropoietin (EPO) from Bos taurus (Bovine).